A 140-amino-acid polypeptide reads, in one-letter code: Coiled-coil domain-containing protein 126 (140 aa).

The first 26 residues, 1–26 (MFFTISRKNMSQKLSLLLLVFGLIWG), serve as a signal peptide directing secretion. 2 N-linked (GlcNAc...) asparagine glycosylation sites follow: Asn110 and Asn134. The tract at residues 120 to 140 (TSGNLVPVTTNKRTNVSGSIR) is disordered.

The protein localises to the secreted. The protein is Coiled-coil domain-containing protein 126 (CCDC126) of Homo sapiens (Human).